Consider the following 1320-residue polypeptide: Inner centromere protein A (1320 aa).

5 disordered regions span residues 53-75 (KNSNYLNNNNNNNNNNNNNNNIS), 426-447 (QEKQQQQQEKQQEKQQQQQPVV), 611-679 (NEPI…VVPP), 701-877 (EEEE…NTAS), and 896-1215 (TKSP…DGDE). Low complexity-rich tracts occupy residues 54 to 75 (NSNYLNNNNNNNNNNNNNNNIS), 429 to 447 (QQQQQEKQQEKQQQQQPVV), and 615 to 640 (QQPSSSSSQLSSSQQPSSSSSSSSSS). Residues 221–444 (QQNQFQEQHK…KQQEKQQQQQ (224 aa)) are a coiled coil. The span at 653 to 668 (TIVTSKPTNKVQPQSL) shows a compositional bias: polar residues. The segment covering 669-679 (NSNINNNVVPP) has biased composition (low complexity). A coiled-coil region spans residues 683–855 (AAIANKLKKQ…QKKKTVQTIL (173 aa)). Residues 701–835 (EEEERLRKKQ…QEKEKQEKQK (135 aa)) are compositionally biased toward basic and acidic residues. Positions 851 to 863 (VQTILPTPQTPSR) are enriched in polar residues. The span at 864–877 (SANNNYDDAANTAS) shows a compositional bias: low complexity. 2 stretches are compositionally biased toward acidic residues: residues 908–926 (DDQDDDDCEDYDGTDENSE) and 934–951 (QDDSDQEIEEQFENDSDE). A compositionally biased stretch (low complexity) spans 965–977 (NKNKNSNNSNNNN). A compositionally biased stretch (basic and acidic residues) spans 981 to 1000 (QSRKDKSIVFDSDSLNRNHN). Composition is skewed to low complexity over residues 1026-1040 (SNMKNNNNNNTYSNS) and 1047-1061 (SPPSSVSDYSPSSES). Over residues 1062–1071 (NDCFSPLTPT) the composition is skewed to polar residues. The span at 1072–1096 (NNNKINNNKINNNNSNNNSFNNSNS) shows a compositional bias: low complexity. Polar residues predominate over residues 1120-1136 (SKTSPFLTIRNTPSPLK). Positions 1143–1154 (NMSSASSLSSFD) are enriched in low complexity. A compositionally biased stretch (acidic residues) spans 1155 to 1170 (SDNDSDYNDNDIDDGE). Positions 1175–1187 (PNENFTTPLKNQE) are enriched in polar residues. A compositionally biased stretch (low complexity) spans 1188–1198 (NNNNNNSNNSN). Over residues 1199–1209 (TQYPIITSPPS) the composition is skewed to polar residues.

This sequence belongs to the INCENP family. In terms of assembly, interacts with aurK.

It localises to the chromosome. Its subcellular location is the centromere. The protein localises to the cytoplasm. It is found in the cytoskeleton. The protein resides in the spindle. It localises to the nucleus. Its subcellular location is the cleavage furrow. Functionally, chromosomal passenger protein that seems to be required for chromosome segregation and the onset of cytokinesis during mitosis. Plays a key role in the abscission of daughter cells at the end of cytokinesis and in the establishment or maintenance of a bipolar spindle. This Dictyostelium discoideum (Social amoeba) protein is Inner centromere protein A (icpA).